Reading from the N-terminus, the 203-residue chain is uncharacterized protein (203 aa).

Residues 1–23 (MKKIYKALISSLLLSTSINVAYA) form the signal peptide. Residues 24–87 (ETQYVTENLS…ILNSDLSSTP (64 aa)) form the SH3b domain. A helical transmembrane segment spans residues 167 to 189 (IAIQWFIYGGSVLGVGLLFGLLI).

The protein to E.coli YgiM.

It localises to the membrane. This is an uncharacterized protein from Haemophilus influenzae (strain ATCC 51907 / DSM 11121 / KW20 / Rd).